The following is a 944-amino-acid chain: Trehalose monomycolate exporter MmpL3 (944 aa).

The Cytoplasmic segment spans residues 1–13; it reads MFAWWGRTVYRYR. Residues 14–34 form a helical membrane-spanning segment; sequence FIVIGVMVALCLGGGVFGLSL. Over 35 to 185 the chain is Periplasmic; that stretch reads GKHVTQSGFY…TIATDQRRME (151 aa). 40-44 is an a 1,2-diacylglycero-3-phosphoethanolamine binding site; sequence QSGFY. A helical membrane pass occupies residues 186–206; that stretch reads VLALPLVAVVLFFVFGGVIAA. Topologically, residues 207–209 are cytoplasmic; it reads GLP. The chain crosses the membrane as a helical span at residues 210–230; that stretch reads VMVGGLCIAGALGIMRFLAIF. The Periplasmic portion of the chain corresponds to 231-235; that stretch reads GPVHY. Residues 236–256 traverse the membrane as a helical segment; sequence FAQPVVSLIGLGIAIDYGLFI. Residues 257–286 lie on the Cytoplasmic side of the membrane; it reads VSRFREEIAEGYDTETAVRRTVITAGRTVT. Residues 287–307 traverse the membrane as a helical segment; that stretch reads FSAVLIVASAIGLLLFPQGFL. Over 308 to 314 the chain is Periplasmic; that stretch reads KSLTYAT. Residues 315 to 335 traverse the membrane as a helical segment; the sequence is IASVMLSAILSITVLPACLGI. The Cytoplasmic segment spans residues 336 to 396; sequence LGKHVDALGV…KLVNRVMKRP (61 aa). Residues 397–417 traverse the membrane as a helical segment; it reads VLFAAPIVIIMILLIIPVGKL. Topologically, residues 418 to 562 are periplasmic; sequence SLGGISEKYL…HGLFAKMPLM (145 aa). Residues 563-583 form a helical membrane-spanning segment; sequence VVILLTTTIVLMFLAFGSVVL. Residues 584–586 are Cytoplasmic-facing; the sequence is PIK. Residues 587 to 607 traverse the membrane as a helical segment; sequence ATLMSALTLGSTMGILTWIFV. The Periplasmic portion of the chain corresponds to 608-616; the sequence is DGHFSKWLN. The chain crosses the membrane as a helical span at residues 617-637; that stretch reads FTPTPLTAPVIGLIIALVFGL. At 638-672 the chain is on the cytoplasmic side; the sequence is STDYEVFLVSRMVEARERGMSTQEAIRIGTAATGR. A helical membrane pass occupies residues 673–693; the sequence is IITAAALIVAVVAGAFVFSDL. Residues 694 to 698 are Periplasmic-facing; sequence VMMKY. Residues 699–719 form a helical membrane-spanning segment; the sequence is LAFGLMAALLLDATVVRMFLV. Residues 720-944 are Cytoplasmic-facing; sequence PSVMKLLGDD…QDLLRREGRL (225 aa). Residues 778 to 944 form a disordered region; that stretch reads AAGDPRPPHD…QDLLRREGRL (167 aa). Residues 791–828 show a composition bias toward low complexity; that stretch reads PLAESPRPARSSPASSPELTPALEATAAPAAPSGASTT. Residues 829–839 are compositionally biased toward polar residues; that stretch reads RMQIGSSTEPP. Pro residues predominate over residues 855–866; sequence STPPPTPTPPSA.

Belongs to the resistance-nodulation-cell division (RND) (TC 2.A.6) family. MmpL subfamily. In terms of assembly, monomer. Interacts with TtfA (via N-terminus); active trehalose monomycolate (TMM) biosynthesis is not required for the complex formation.

The protein localises to the cell inner membrane. It is found in the cell septum. It localises to the cell tip. Its activity is regulated as follows. Inhibited by the antitubercular drug SQ109. Also inhibited by several other compounds such as the pyrrole derivative BM212, the adamantyl urea derivative AU1235, the benzimidazole C215, indoleamides, tetrahydropyrazolo[1,5-a]pyrimidine-3-carboxamide (THPP) and N-benzyl-6',7'-dihydrospiro[piperidine-4,4'-thieno[3,2-c]pyran] (Spiro) analogs. Inhibitory effects of these compounds, including SQ109, are most likely due to their ability to dissipate the transmembrane electrochemical proton gradient. Functionally, transports trehalose monomycolate (TMM) to the cell wall. Flips TMM across the inner membrane. Membrane potential is not required for this function. Transports probably phosphatidylethanolamine (PE) as well. Binds specifically both TMM and PE, but not trehalose dimycolate (TDM). Also binds diacylglycerol (DAG) and other phospholipids, including phosphatidylglycerol (PG), phosphatidylinositol (PI), and cardiolipin (CDL). Contributes to membrane potential, cell wall composition, antibiotic susceptibility and fitness. Could also be part of a heme-iron acquisition system. In terms of biological role, is the target of the antitubercular drug SQ109. This Mycobacterium tuberculosis (strain ATCC 25618 / H37Rv) protein is Trehalose monomycolate exporter MmpL3 (mmpL3).